We begin with the raw amino-acid sequence, 183 residues long: MDLNISTALRSFTQRYIDLWQQQTGHLPASKDLYGVPSPCIVATGEDQVFWQPQAFLPEATLTNIERALEIQLHPDIHDFYTQQYAGDMMADLGNHRFTLLQVWSEDDFIRLQENLIGHLVTQKRLKLSPTLFLATTSSEMTMASLCNVSGNVVLEQFGSDKRTLLASTLSHFLDALRPVLPE.

It belongs to the Syd family.

Its subcellular location is the cell inner membrane. Its function is as follows. Interacts with the SecY protein in vivo. May bind preferentially to an uncomplexed state of SecY, thus functioning either as a chelating agent for excess SecY in the cell or as a regulatory factor that negatively controls the translocase function. This Yersinia pseudotuberculosis serotype O:1b (strain IP 31758) protein is Protein Syd.